A 387-amino-acid chain; its full sequence is Major outer membrane porin (387 aa).

Positions 1-22 (MKKLLKSVLAFAVLGSASSLHA) are cleaved as a signal peptide.

The protein belongs to the chlamydial porin (CP) (TC 1.B.2) family. As to quaternary structure, part of a disulfide cross-linked outer membrane complex (COMC) composed of the major outer membrane porin (MOMP), the small cysteine-rich protein (OmcA) and the large cysteine-rich periplasmic protein (OmcB).

Its subcellular location is the cell outer membrane. Its function is as follows. In elementary bodies (EBs, the infectious stage, which is able to survive outside the host cell) provides the structural integrity of the outer envelope through disulfide cross-links with the small cysteine-rich protein and the large cysteine-rich periplasmic protein. It has been described in publications as the Sarkosyl-insoluble COMC (Chlamydia outer membrane complex), and serves as the functional equivalent of peptidoglycan. Permits diffusion of specific solutes through the outer membrane. This chain is Major outer membrane porin (ompA), found in Chlamydia muridarum (strain MoPn / Nigg).